We begin with the raw amino-acid sequence, 367 residues long: Peptide chain release factor 2 (367 aa).

Q249 carries the N5-methylglutamine modification.

Belongs to the prokaryotic/mitochondrial release factor family. Post-translationally, methylated by PrmC. Methylation increases the termination efficiency of RF2.

It is found in the cytoplasm. Its function is as follows. Peptide chain release factor 2 directs the termination of translation in response to the peptide chain termination codons UGA and UAA. The protein is Peptide chain release factor 2 of Thermotoga petrophila (strain ATCC BAA-488 / DSM 13995 / JCM 10881 / RKU-1).